The chain runs to 433 residues: MWKLLANVVSNVVSQGWEVFVEVFVVSYRHIPSHTLSVPTDITVDKLNMLANKTLNNISDKEFESVAFDFLISSTILRTTLEEFVQENHVPVESVISIECIVQEPAPEPDSDIALLDWIGAIRCNDKFIASATYGGELVLWNHYGKKLTSSVLHEEAIKCLALLPDQKEDRIVTGGHDQVLMLSDVETHGSSTFIKPTCVLRGHERSVEAIAVNTDGTRTVSGGFDKMLKVWNTDKDDTSTVFEKTRSEKTGKKKRTDIITKIPMVTLSGHKDAIVSAVWSPNSAKEVLTVSWDHTISIWDLELAGQINTLAAKKAFTSISVCCSSGMLITGSVDPVVRLWDPRSHEGTLVKQSFIGHCGWISSVFWNKVKENLFISASFDKTVKMWDVRSNKTPLYDLVGHSDRILCCDWSVNELIVSGGVDCTMKTYRRKM.

Positions 21 to 102 (VEVFVVSYRH…ESVISIECIV (82 aa)) are ubiquitin-like (UBL) domain. WD repeat units follow at residues 114 to 151 (ALLD…LTSS), 153 to 194 (LHEE…SSTF), 203 to 242 (GHER…TSTV), 270 to 310 (GHKD…QINT), 312 to 351 (AAKK…GTLV), 357 to 397 (GHCG…TPLY), and 401 to 433 (GHSD…RRKM).

Belongs to the WD repeat WDR12/YTM1 family.

It localises to the nucleus. The protein resides in the nucleolus. The protein localises to the nucleoplasm. Its function is as follows. Required for maturation of ribosomal RNAs and formation of the large ribosomal subunit. The polypeptide is Ribosome biogenesis protein WDR12 homolog (Brugia malayi (Filarial nematode worm)).